Here is a 295-residue protein sequence, read N- to C-terminus: Pyridoxal 5'-phosphate synthase subunit PdxS (295 aa).

D25 contributes to the D-ribose 5-phosphate binding site. The Schiff-base intermediate with D-ribose 5-phosphate role is filled by K82. G154 contacts D-ribose 5-phosphate. Residue R166 participates in D-glyceraldehyde 3-phosphate binding. Residues G215 and 236-237 (GS) contribute to the D-ribose 5-phosphate site.

This sequence belongs to the PdxS/SNZ family. In terms of assembly, in the presence of PdxT, forms a dodecamer of heterodimers.

The catalysed reaction is aldehydo-D-ribose 5-phosphate + D-glyceraldehyde 3-phosphate + L-glutamine = pyridoxal 5'-phosphate + L-glutamate + phosphate + 3 H2O + H(+). It participates in cofactor biosynthesis; pyridoxal 5'-phosphate biosynthesis. Functionally, catalyzes the formation of pyridoxal 5'-phosphate from ribose 5-phosphate (RBP), glyceraldehyde 3-phosphate (G3P) and ammonia. The ammonia is provided by the PdxT subunit. Can also use ribulose 5-phosphate and dihydroxyacetone phosphate as substrates, resulting from enzyme-catalyzed isomerization of RBP and G3P, respectively. In Macrococcus caseolyticus (strain JCSC5402) (Macrococcoides caseolyticum), this protein is Pyridoxal 5'-phosphate synthase subunit PdxS.